A 212-amino-acid polypeptide reads, in one-letter code: Large ribosomal subunit protein uL4 (212 aa).

Belongs to the universal ribosomal protein uL4 family. As to quaternary structure, part of the 50S ribosomal subunit.

Its function is as follows. One of the primary rRNA binding proteins, this protein initially binds near the 5'-end of the 23S rRNA. It is important during the early stages of 50S assembly. It makes multiple contacts with different domains of the 23S rRNA in the assembled 50S subunit and ribosome. Functionally, forms part of the polypeptide exit tunnel. The protein is Large ribosomal subunit protein uL4 of Caulobacter vibrioides (strain ATCC 19089 / CIP 103742 / CB 15) (Caulobacter crescentus).